The following is a 118-amino-acid chain: Large ribosomal subunit protein uL18 (118 aa).

This sequence belongs to the universal ribosomal protein uL18 family. As to quaternary structure, part of the 50S ribosomal subunit; part of the 5S rRNA/L5/L18/L25 subcomplex. Contacts the 5S and 23S rRNAs.

In terms of biological role, this is one of the proteins that bind and probably mediate the attachment of the 5S RNA into the large ribosomal subunit, where it forms part of the central protuberance. This Rickettsia akari (strain Hartford) protein is Large ribosomal subunit protein uL18.